The chain runs to 782 residues: General transcription and DNA repair factor IIH helicase/translocase subunit XPB (782 aa).

A compositionally biased stretch (basic and acidic residues) spans 1 to 11; the sequence is MGKRDRADREK. Residues 1-51 are disordered; it reads MGKRDRADREKKKSKKRHYEDEEDEEDDAPGNDTQEAVPSAAGKQVDESGT. Residues 6-18 carry the Nuclear localization signal motif; that stretch reads RADREKKKSKKRH. The span at 21–30 shows a compositional bias: acidic residues; that stretch reads DEEDEEDDAP. One can recognise a Helicase ATP-binding domain in the interval 327–488; the sequence is MFGNGRARSG…DLNFLIGPKL (162 aa). Position 340 to 347 (340 to 347) interacts with ATP; the sequence is LPCGAGKS. The DEVH box motif lies at 441–444; that stretch reads DEVH. Residues 542-702 enclose the Helicase C-terminal domain; it reads RACQFLIKFH…LAGMEEEDLA (161 aa). Ser686 is modified (phosphoserine). The residue at position 751 (Ser751) is a Phosphoserine; by CK2.

This sequence belongs to the helicase family. RAD25/XPB subfamily. In terms of assembly, component of the 7-subunit TFIIH core complex composed of XPB/ERCC3, XPD/ERCC2, GTF2H1, GTF2H2, GTF2H3, GTF2H4 and GTF2H5, which is active in NER. The core complex associates with the 3-subunit CDK-activating kinase (CAK) module composed of CCNH/cyclin H, CDK7 and MNAT1 to form the 10-subunit holoenzyme (holo-TFIIH) active in transcription. Interacts with PUF60. Interacts with ATF7IP. Interacts with KAT2A; leading to KAT2A recruitment to promoters and acetylation of histones. Part of TBP-based Pol II pre-initiation complex (PIC), in which Pol II core assembles with general transcription factors and other specific initiation factors including GTF2E1, GTF2E2, GTF2F1, GTF2F2, TCEA1, ERCC2, ERCC3, GTF2H2, GTF2H3, GTF2H4, GTF2H5, GTF2A1, GTF2A2, GTF2B and TBP; this large multi-subunit PIC complex mediates DNA unwinding and targets Pol II core to the transcription start site where the first phosphodiester bond forms. Phosphorylation on Ser-751 by CK2 controls the 5'-excision activity of ERCC1-XPF endonuclease; phosphorylated protein inhibits the excision activity and thus NER. Dephosphorylation reactivates the 5'-excision step. Phosphorylation has no effect on transcription or the 3'-5' helicase activity.

Its subcellular location is the nucleus. It catalyses the reaction Couples ATP hydrolysis with the unwinding of duplex DNA by translocating in the 3'-5' direction.. It carries out the reaction ATP + H2O = ADP + phosphate + H(+). Its activity is regulated as follows. Phosphorylation on Ser-751 by CK2 controls the 5'-excision activity of ERCC1-XPF endonuclease; phosphorylated protein inhibits the excision activity and thus NER. ATPase activity is stimulated by TFIIH subunit p52 (GTF2H4). DNA translocase activity by this subunit in TFIIH is stimulated by XPA, ERCC5/XPG and XFP plus ERCC1. ATP-dependent 3'-5' DNA helicase/translocase; binds dsDNA rather than ssDNA, unzipping it in a translocase rather than classical helicase activity. Component of the general transcription and DNA repair factor IIH (TFIIH) core complex. When complexed to CDK-activating kinase (CAK), involved in RNA transcription by RNA polymerase II. The ATPase activity of XPB/ERCC3, but not its helicase activity, is required for DNA opening; it may wrap around the damaged DNA wedging it open, causing localized melting and twisting that allows XPD/ERCC2 helicase to anchor. The ATP-dependent helicase activity of XPB/ERCC3 may be required for promoter escape. Also involved in transcription-coupled nucleotide excision repair (NER) of damaged DNA. In NER, TFIIH acts by opening DNA around the lesion to allow the excision of the damaged oligonucleotide and its replacement by a new DNA fragment. The structure of the TFIIH transcription complex differs from the NER-TFIIH complex; large movements by XPD/ERCC2 and XPB/ERCC3 are stabilized by XPA. This is General transcription and DNA repair factor IIH helicase/translocase subunit XPB (ERCC3) from Bos taurus (Bovine).